The following is a 675-amino-acid chain: Zeaxanthin epoxidase, chloroplastic (675 aa).

A chloroplast-targeting transit peptide spans 1-25 (MASTVLYNSLTTSTTVFLRSHLPIS). FAD is bound by residues 92-120 (RILV…KVFE) and 370-383 (KLTW…LLGD). Residues 558–622 (ICLSRKEDEP…HGTWITDNEG (65 aa)) form the FHA domain.

It depends on FAD as a cofactor.

It localises to the plastid. It is found in the chloroplast thylakoid membrane. The catalysed reaction is all-trans-zeaxanthin + 4 reduced [2Fe-2S]-[ferredoxin] + 2 O2 + 4 H(+) = all-trans-violaxanthin + 4 oxidized [2Fe-2S]-[ferredoxin] + 2 H2O. It functions in the pathway plant hormone biosynthesis; abscisate biosynthesis. With respect to regulation, inhibited by diphenyleneiodonium (DPI). Its function is as follows. Converts zeaxanthin into antheraxanthin and subsequently violaxanthin. Involved in the epoxidation of zeaxanthin. The chain is Zeaxanthin epoxidase, chloroplastic from Spinacia oleracea (Spinach).